Here is a 504-residue protein sequence, read N- to C-terminus: Maturase K (504 aa).

It belongs to the intron maturase 2 family. MatK subfamily.

The protein resides in the plastid. It is found in the chloroplast. In terms of biological role, usually encoded in the trnK tRNA gene intron. Probably assists in splicing its own and other chloroplast group II introns. This Berzelia lanuginosa (Buttonbush) protein is Maturase K.